The sequence spans 219 residues: Probable nicotinate-nucleotide adenylyltransferase (219 aa).

It belongs to the NadD family.

The catalysed reaction is nicotinate beta-D-ribonucleotide + ATP + H(+) = deamido-NAD(+) + diphosphate. It functions in the pathway cofactor biosynthesis; NAD(+) biosynthesis; deamido-NAD(+) from nicotinate D-ribonucleotide: step 1/1. Functionally, catalyzes the reversible adenylation of nicotinate mononucleotide (NaMN) to nicotinic acid adenine dinucleotide (NaAD). The sequence is that of Probable nicotinate-nucleotide adenylyltransferase from Hahella chejuensis (strain KCTC 2396).